The chain runs to 261 residues: Putative imidazole glycerol phosphate synthase subunit hisF2 (261 aa).

Aspartate 138 is an active-site residue.

Belongs to the HisA/HisF family. Heterodimer of HisH and HisF.

It is found in the cytoplasm. It catalyses the reaction 5-[(5-phospho-1-deoxy-D-ribulos-1-ylimino)methylamino]-1-(5-phospho-beta-D-ribosyl)imidazole-4-carboxamide + L-glutamine = D-erythro-1-(imidazol-4-yl)glycerol 3-phosphate + 5-amino-1-(5-phospho-beta-D-ribosyl)imidazole-4-carboxamide + L-glutamate + H(+). It participates in amino-acid biosynthesis; L-histidine biosynthesis; L-histidine from 5-phospho-alpha-D-ribose 1-diphosphate: step 5/9. Functionally, IGPS catalyzes the conversion of PRFAR and glutamine to IGP, AICAR and glutamate. The HisF subunit catalyzes the cyclization activity that produces IGP and AICAR from PRFAR using the ammonia provided by the HisH subunit. The chain is Putative imidazole glycerol phosphate synthase subunit hisF2 (hisF2) from Prochlorococcus marinus (strain MIT 9313).